Consider the following 229-residue polypeptide: CMRF35-like molecule 6 (229 aa).

Residues methionine 1–glycine 21 form the signal peptide. The region spanning histidine 22–lysine 126 is the Ig-like V-type domain. Residues histidine 22–histidine 188 lie on the Extracellular side of the membrane. Residues cysteine 43 and cysteine 110 are joined by a disulfide bond. N-linked (GlcNAc...) asparagine glycosylation is found at asparagine 90 and asparagine 99. Residues phenylalanine 189 to tryptophan 209 traverse the membrane as a helical segment. Topologically, residues valine 210–glutamine 229 are cytoplasmic.

It belongs to the CD300 family.

It localises to the cell membrane. This Mus musculus (Mouse) protein is CMRF35-like molecule 6 (Cd300c).